The primary structure comprises 36 residues: Neurotoxin PRTx26An0C3 (36 aa).

3 disulfides stabilise this stretch: Cys-3–Cys-17, Cys-10–Cys-22, and Cys-16–Cys-34.

Expressed by the venom gland.

The protein resides in the secreted. Functionally, neurotoxin. Causes spastic paralysis and death in mice. Moderate inhibitor of L-type calcium channels (Cav1/CACNA1). The polypeptide is Neurotoxin PRTx26An0C3 (Phoneutria nigriventer (Brazilian armed spider)).